A 223-amino-acid chain; its full sequence is Adenylate kinase (223 aa).

ATP is bound at residue 10–15; the sequence is GAGKGT. The tract at residues 30–59 is NMP; it reads STGDILRQAVKEGTEVGKIAGELMKAGKLI. AMP-binding positions include Thr-31, Arg-36, 57–59, 85–88, and Gln-92; these read KLI and GFPR. The segment at 126–163 is LID; sequence GRYVCAQCGAGYHDEFKRPHKEGVCDICGSTEFKRRPD. Arg-127 provides a ligand contact to ATP. 4 residues coordinate Zn(2+): Cys-130, Cys-133, Cys-150, and Cys-153. 2 residues coordinate AMP: Arg-160 and Arg-172. Residue Leu-200 participates in ATP binding.

The protein belongs to the adenylate kinase family. As to quaternary structure, monomer.

The protein localises to the cytoplasm. The enzyme catalyses AMP + ATP = 2 ADP. Its pathway is purine metabolism; AMP biosynthesis via salvage pathway; AMP from ADP: step 1/1. Functionally, catalyzes the reversible transfer of the terminal phosphate group between ATP and AMP. Plays an important role in cellular energy homeostasis and in adenine nucleotide metabolism. The polypeptide is Adenylate kinase (Zymomonas mobilis subsp. mobilis (strain ATCC 31821 / ZM4 / CP4)).